The primary structure comprises 126 residues: Fluoride-specific ion channel FluC 1 (126 aa).

3 consecutive transmembrane segments (helical) span residues 37 to 57, 67 to 87, and 98 to 118; these read HWGT…VLAL, IALL…TFVV, and LLAA…AAAA. Na(+) contacts are provided by Gly-77 and Ser-80.

Belongs to the fluoride channel Fluc/FEX (TC 1.A.43) family.

The protein localises to the cell inner membrane. It carries out the reaction fluoride(in) = fluoride(out). Na(+) is not transported, but it plays an essential structural role and its presence is essential for fluoride channel function. In terms of biological role, fluoride-specific ion channel. Important for reducing fluoride concentration in the cell, thus reducing its toxicity. The polypeptide is Fluoride-specific ion channel FluC 1 (Parasynechococcus marenigrum (strain WH8102)).